We begin with the raw amino-acid sequence, 322 residues long: Aspartate carbamoyltransferase catalytic subunit (322 aa).

The carbamoyl phosphate site is built by arginine 65 and threonine 66. Lysine 93 contributes to the L-aspartate binding site. Positions 115, 143, and 146 each coordinate carbamoyl phosphate. L-aspartate contacts are provided by arginine 176 and arginine 230. The carbamoyl phosphate site is built by glycine 271 and proline 272.

Belongs to the aspartate/ornithine carbamoyltransferase superfamily. ATCase family. In terms of assembly, heterododecamer (2C3:3R2) of six catalytic PyrB chains organized as two trimers (C3), and six regulatory PyrI chains organized as three dimers (R2).

It catalyses the reaction carbamoyl phosphate + L-aspartate = N-carbamoyl-L-aspartate + phosphate + H(+). Its pathway is pyrimidine metabolism; UMP biosynthesis via de novo pathway; (S)-dihydroorotate from bicarbonate: step 2/3. Catalyzes the condensation of carbamoyl phosphate and aspartate to form carbamoyl aspartate and inorganic phosphate, the committed step in the de novo pyrimidine nucleotide biosynthesis pathway. The chain is Aspartate carbamoyltransferase catalytic subunit from Brucella anthropi (strain ATCC 49188 / DSM 6882 / CCUG 24695 / JCM 21032 / LMG 3331 / NBRC 15819 / NCTC 12168 / Alc 37) (Ochrobactrum anthropi).